Here is a 30-residue protein sequence, read N- to C-terminus: V-type proton ATPase catalytic subunit A isoform 1 (30 aa).

This sequence belongs to the ATPase alpha/beta chains family. As to quaternary structure, V-ATPase is a heteromultimeric enzyme composed of a peripheral catalytic V1 complex (main components: subunits A, B, C, D, E, and F) attached to an integral membrane V0 proton pore complex (main component: the proteolipid protein).

It catalyses the reaction ATP + H2O + 4 H(+)(in) = ADP + phosphate + 5 H(+)(out). In terms of biological role, catalytic subunit of the peripheral V1 complex of vacuolar ATPase. V-ATPase vacuolar ATPase is responsible for acidifying a variety of intracellular compartments in eukaryotic cells. The protein is V-type proton ATPase catalytic subunit A isoform 1 of Psilotum nudum (Whisk fern).